We begin with the raw amino-acid sequence, 473 residues long: UDP-N-acetylmuramate--L-alanine ligase (473 aa).

Position 115-121 (115-121 (GTHGKTT)) interacts with ATP.

Belongs to the MurCDEF family.

Its subcellular location is the cytoplasm. The catalysed reaction is UDP-N-acetyl-alpha-D-muramate + L-alanine + ATP = UDP-N-acetyl-alpha-D-muramoyl-L-alanine + ADP + phosphate + H(+). It functions in the pathway cell wall biogenesis; peptidoglycan biosynthesis. In terms of biological role, cell wall formation. This is UDP-N-acetylmuramate--L-alanine ligase from Rhizorhabdus wittichii (strain DSM 6014 / CCUG 31198 / JCM 15750 / NBRC 105917 / EY 4224 / RW1) (Sphingomonas wittichii).